We begin with the raw amino-acid sequence, 325 residues long: Replication factor C small subunit (325 aa).

ATP is bound at residue 45–52 (GPPGTGKT).

This sequence belongs to the activator 1 small subunits family. RfcS subfamily. In terms of assembly, heteromultimer composed of small subunits (RfcS) and large subunits (RfcL).

Part of the RFC clamp loader complex which loads the PCNA sliding clamp onto DNA. The sequence is that of Replication factor C small subunit from Sulfolobus acidocaldarius (strain ATCC 33909 / DSM 639 / JCM 8929 / NBRC 15157 / NCIMB 11770).